A 90-amino-acid chain; its full sequence is DNA-binding protein HU (90 aa).

The protein belongs to the bacterial histone-like protein family. Homodimer.

In terms of biological role, histone-like DNA-binding protein which is capable of wrapping DNA to stabilize it, and thus to prevent its denaturation under extreme environmental conditions. This chain is DNA-binding protein HU (hup), found in Haemophilus influenzae (strain ATCC 51907 / DSM 11121 / KW20 / Rd).